The following is a 241-amino-acid chain: Cell division cycle-associated protein 4 (241 aa).

The 48-residue stretch at 30 to 77 folds into the SERTA domain; the sequence is YSLQRQSLLDMSLVKLQLCHMLVEPNLCRSVLIANTVRQIQEEMTQDG.

Highest levels of expression in the pancreas, thymus, testis, spleen, liver, placenta and leukocytes. Relatively low levels in the lung, kidney, prostate, ovary, small intestine and colon. Hardly detectable, if at all, in the brain, skeletal muscle and heart.

The protein localises to the nucleus. Its function is as follows. May participate in the regulation of cell proliferation through the E2F/RB pathway. May be involved in molecular regulation of hematopoietic stem cells and progenitor cell lineage commitment and differentiation. The chain is Cell division cycle-associated protein 4 (CDCA4) from Homo sapiens (Human).